The sequence spans 813 residues: Microtubule-associated protein 6 (813 aa).

3 S-palmitoyl cysteine lipidation sites follow: Cys-5, Cys-10, and Cys-11. Disordered regions lie at residues 36–283 (ATEH…AAAD), 314–651 (VKPI…KDES), and 756–813 (PLKD…ESSP). A compositionally biased stretch (pro residues) spans 41-50 (GAPPQPPPPQ). Residues 51-62 (QQAQPALAPPSA) are compositionally biased toward low complexity. The segment covering 100–112 (GRSGPGPGLGSGS) has biased composition (gly residues). Ser-102 carries the post-translational modification Phosphoserine. The segment at 118 to 141 (DSVMRQDYRAWKVQRPEPSCRPRS) is mn 1. A compositionally biased stretch (basic and acidic residues) spans 121–141 (MRQDYRAWKVQRPEPSCRPRS). The tract at residues 126–140 (RAWKVQRPEPSCRPR) is calmodulin-binding. The residue at position 143 (Tyr-143) is a Phosphotyrosine. Over residues 149 to 173 (PFERETQYQKDFRAWPLPRRGDHPW) the composition is skewed to basic and acidic residues. A mn 2 region spans residues 153-176 (ETQYQKDFRAWPLPRRGDHPWIPK). The tract at residues 162 to 176 (AWPLPRRGDHPWIPK) is calmodulin-binding. Residue Ser-187 is modified to Phosphoserine. Calmodulin-binding stretches follow at residues 189–203 (PILGAPKRRPQSQER), 306–320 (RAWTDIKPVKPIKAK), 357–371 (RRRIRSLYSEPFKEP), and 384–398 (PKKTSASHKPTRKAK). The interval 298-321 (SSSYRNEFRAWTDIKPVKPIKAKP) is mn 3. Residues 367-376 (PFKEPPKVEK) show a composition bias toward basic and acidic residues. Positions 383-398 (KPKKTSASHKPTRKAK) are enriched in basic residues. Positions 420-439 (KPDDKEQSKEMNNKLAEAKE) are enriched in basic and acidic residues. The span at 443 to 454 (QPVSDSSKTQGP) shows a compositional bias: polar residues. Positions 637-651 (KDQDPMVPEHPKDES) are enriched in basic and acidic residues. The residue at position 812 (Ser-812) is a Phosphoserine.

Belongs to the STOP family. As to quaternary structure, interacts with calmodulin (via C-terminus); the interaction is dependent on Ca(2+). Interacts (via C-terminus) with TMEM106B (via N-terminus). Interacts with ZDHHC17 (via ANK repeats). Interacts with ZDHHC13 (via ANK repeats). Post-translationally, palmitoylated. Probably depalmitoylated by ABHD17A, ABHD17B and ABHD17C. During neuronal polarization, palmitoylation and depalmitoylation cycles regulate MAP6 shuttling between secretory vesicles and microtubules, and its polarized distribution in the axon. Expressed in brain (at protein level). Expressed in spinal cord. Isoform 2 expression is up-regulated in the prefrontal cortex (Brodmann's area 46) of patients with schizophrenia (postmortem brain study).

Its subcellular location is the cytoplasm. The protein localises to the cytoskeleton. The protein resides in the golgi apparatus. It localises to the cell projection. It is found in the axon. Its subcellular location is the dendrite. The protein localises to the cytoplasmic vesicle. The protein resides in the secretory vesicle membrane. Functionally, involved in microtubule stabilization in many cell types, including neuronal cells. Specifically has microtubule cold stabilizing activity. Involved in dendrite morphogenesis and maintenance by regulating lysosomal trafficking via its interaction with TMEM106B. Regulates KIF5A-mediated axonal cargo transport. Regulates axonal growth during neuron polarization. This chain is Microtubule-associated protein 6 (MAP6), found in Homo sapiens (Human).